Here is a 138-residue protein sequence, read N- to C-terminus: Endoribonuclease YbeY (138 aa).

Zn(2+) contacts are provided by histidine 106, histidine 110, and aspartate 116.

This sequence belongs to the endoribonuclease YbeY family. It depends on Zn(2+) as a cofactor.

It localises to the cytoplasm. Functionally, single strand-specific metallo-endoribonuclease involved in late-stage 70S ribosome quality control and in maturation of the 3' terminus of the 16S rRNA. In Phocaeicola vulgatus (strain ATCC 8482 / DSM 1447 / JCM 5826 / CCUG 4940 / NBRC 14291 / NCTC 11154) (Bacteroides vulgatus), this protein is Endoribonuclease YbeY.